Consider the following 326-residue polypeptide: Putative ubiquitin-conjugating enzyme E2 38 (326 aa).

The UBC core domain maps to N54–V214. The Glycyl thioester intermediate role is filled by C140. Residues L297 to R326 form a disordered region. Over residues K315 to R326 the composition is skewed to basic residues.

It belongs to the ubiquitin-conjugating enzyme family.

It carries out the reaction S-ubiquitinyl-[E1 ubiquitin-activating enzyme]-L-cysteine + [E2 ubiquitin-conjugating enzyme]-L-cysteine = [E1 ubiquitin-activating enzyme]-L-cysteine + S-ubiquitinyl-[E2 ubiquitin-conjugating enzyme]-L-cysteine.. It functions in the pathway protein modification; protein ubiquitination. Its function is as follows. Accepts the ubiquitin from the E1 complex and catalyzes its covalent attachment to other proteins. This Arabidopsis thaliana (Mouse-ear cress) protein is Putative ubiquitin-conjugating enzyme E2 38 (UBC38).